The chain runs to 548 residues: Chaperonin GroEL (548 aa).

Residues 30–33 (TLGP), lysine 51, 87–91 (DGTTT), glycine 415, 479–481 (NAA), and aspartate 495 contribute to the ATP site. A disordered region spans residues 524–548 (LPKEDKSSDSNSSPAGGMGGMGGMM). The span at 539–548 (GGMGGMGGMM) shows a compositional bias: gly residues.

Belongs to the chaperonin (HSP60) family. As to quaternary structure, forms a cylinder of 14 subunits composed of two heptameric rings stacked back-to-back. Interacts with the co-chaperonin GroES.

The protein localises to the cytoplasm. The enzyme catalyses ATP + H2O + a folded polypeptide = ADP + phosphate + an unfolded polypeptide.. Together with its co-chaperonin GroES, plays an essential role in assisting protein folding. The GroEL-GroES system forms a nano-cage that allows encapsulation of the non-native substrate proteins and provides a physical environment optimized to promote and accelerate protein folding. This is Chaperonin GroEL from Buchnera aphidicola subsp. Myzus persicae (Myzus persicae primary endosymbiont).